The chain runs to 864 residues: Leucine--tRNA ligase (864 aa).

The 'HIGH' region signature appears at 50–60 (PYPSGKIHMGH). Residues 622–626 (KMSKS) carry the 'KMSKS' region motif. Lysine 625 contributes to the ATP binding site.

The protein belongs to the class-I aminoacyl-tRNA synthetase family.

The protein localises to the cytoplasm. The catalysed reaction is tRNA(Leu) + L-leucine + ATP = L-leucyl-tRNA(Leu) + AMP + diphosphate. In Acidiphilium cryptum (strain JF-5), this protein is Leucine--tRNA ligase.